The primary structure comprises 388 residues: Xylose isomerase (388 aa).

Catalysis depends on residues His-54 and Asp-57. Residues Glu-181, Glu-217, His-220, Asp-245, Asp-255, Asp-257, and Asp-287 each coordinate Mg(2+).

The protein belongs to the xylose isomerase family. In terms of assembly, homotetramer. Requires Mg(2+) as cofactor.

Its subcellular location is the cytoplasm. The enzyme catalyses alpha-D-xylose = alpha-D-xylulofuranose. Its function is as follows. Involved in D-xylose catabolism. The chain is Xylose isomerase (xylA) from Streptomyces murinus.